We begin with the raw amino-acid sequence, 217 residues long: GTP cyclohydrolase 1 (217 aa).

The Zn(2+) site is built by Cys-109, His-112, and Cys-180.

This sequence belongs to the GTP cyclohydrolase I family. As to quaternary structure, toroid-shaped homodecamer, composed of two pentamers of five dimers.

The catalysed reaction is GTP + H2O = 7,8-dihydroneopterin 3'-triphosphate + formate + H(+). It functions in the pathway cofactor biosynthesis; 7,8-dihydroneopterin triphosphate biosynthesis; 7,8-dihydroneopterin triphosphate from GTP: step 1/1. This Vibrio campbellii (strain ATCC BAA-1116) protein is GTP cyclohydrolase 1.